The primary structure comprises 273 residues: Translation initiation factor IF-3, mitochondrial (273 aa).

Residues 1 to 32 (MAALFLKKLTLQTVKTENYCIRRCLGKYILQG) constitute a mitochondrion transit peptide. Positions 33 to 92 (PAPTQQPPRPSCLIHAKAFSTEDTQDEMTKKKKNETAFSSVGRKINERIIHVLDEQGNDL) are cleaved as a propeptide — removed in mature form. The interval 242-273 (EEAAWKAAPDTPRRDALNGGDGKDGASGVLPQ) is disordered. The span at 252–265 (TPRRDALNGGDGKD) shows a compositional bias: basic and acidic residues.

The protein belongs to the IF-3 family.

It localises to the mitochondrion. Its function is as follows. IF-3 binds to the 28S ribosomal subunit and shifts the equilibrium between 55S ribosomes and their 39S and 28S subunits in favor of the free subunits, thus enhancing the availability of 28S subunits on which protein synthesis initiation begins. The polypeptide is Translation initiation factor IF-3, mitochondrial (MTIF3) (Bos taurus (Bovine)).